The sequence spans 691 residues: Elongation factor G (691 aa).

A tr-type G domain is found at 8-282 (ERVRNIGIAA…AVIDYLPAPV (275 aa)). GTP contacts are provided by residues 17 to 24 (AHIDAGKT), 81 to 85 (DTPGH), and 135 to 138 (NKMD).

Belongs to the TRAFAC class translation factor GTPase superfamily. Classic translation factor GTPase family. EF-G/EF-2 subfamily.

Its subcellular location is the cytoplasm. Functionally, catalyzes the GTP-dependent ribosomal translocation step during translation elongation. During this step, the ribosome changes from the pre-translocational (PRE) to the post-translocational (POST) state as the newly formed A-site-bound peptidyl-tRNA and P-site-bound deacylated tRNA move to the P and E sites, respectively. Catalyzes the coordinated movement of the two tRNA molecules, the mRNA and conformational changes in the ribosome. This is Elongation factor G from Synechococcus sp. (strain CC9605).